The primary structure comprises 332 residues: Cyclin-dependent kinase 1 (332 aa).

The 291-residue stretch at 22-312 folds into the Protein kinase domain; sequence FTKLEKIGEG…AKKALVHPYF (291 aa). ATP-binding positions include 28 to 36 and lysine 51; that span reads IGEGTYGVV. Threonine 32 is subject to Phosphothreonine. Tyrosine 33 is subject to Phosphotyrosine. The active-site Proton acceptor is aspartate 146.

Belongs to the protein kinase superfamily. CMGC Ser/Thr protein kinase family. CDC2/CDKX subfamily. In terms of assembly, forms a stable but non-covalent complex with a regulatory subunit and with a cyclin. Interacts with cks-1. Phosphorylated.

The protein localises to the nucleus. It is found in the cytoplasm. It localises to the cytoskeleton. Its subcellular location is the microtubule organizing center. The protein resides in the centrosome. The protein localises to the chromosome. The enzyme catalyses L-seryl-[protein] + ATP = O-phospho-L-seryl-[protein] + ADP + H(+). The catalysed reaction is L-threonyl-[protein] + ATP = O-phospho-L-threonyl-[protein] + ADP + H(+). It carries out the reaction [DNA-directed RNA polymerase] + ATP = phospho-[DNA-directed RNA polymerase] + ADP + H(+). With respect to regulation, phosphorylation both activates and inactivates the enzyme depending on the site of phosphorylation. Its function is as follows. Plays a key role in the control of the eukaryotic cell cycle. Required for entry into S-phase and mitosis. Acts as a component of the kinase complex that phosphorylates the repetitive C-terminus of RNA polymerase II. May function in concert with npp-16 to arrest prophase blastomeres in response to anoxia. The protein is Cyclin-dependent kinase 1 (cdk-1) of Caenorhabditis elegans.